The primary structure comprises 1458 residues: ATPase family AAA domain-containing protein 2B (1458 aa).

The interval 1 to 155 (MVNTRKSSLR…LRGEKKGDGD (155 aa)) is disordered. At serine 16 the chain carries Phosphoserine. Positions 23-33 (PGAGAEPGATG) are enriched in gly residues. The segment covering 34–58 (GSSHFISSRTRSSKTRAASCPAAKA) has biased composition (low complexity). Phosphoserine is present on residues serine 79, serine 81, and serine 86. Residues 99-115 (VCKDKSKSRSTGQREEW) are compositionally biased toward basic and acidic residues. Over residues 116 to 129 (NLSTGQARLTSQPG) the composition is skewed to polar residues. Serine 140 is modified (phosphoserine). The residue at position 221 (threonine 221) is a Phosphothreonine. The segment at 244–286 (NSYGIQNHHEVSTEGEEEESQEEDGDIEVEEAEGEENDRPYNL) is disordered. Acidic residues predominate over residues 256 to 279 (TEGEEEESQEEDGDIEVEEAEGEE). Serine 318 is modified (phosphoserine). Over residues 321–332 (RRSHIRRKKHAI) the composition is skewed to basic residues. Residues 321–353 (RRSHIRRKKHAIHSSDTTSSDEERFERRKSKSM) form a disordered region. Residue 441 to 448 (GPPGTGKT) participates in ATP binding. Serine 939 bears the Phosphoserine mark. A coiled-coil region spans residues 943-974 (QLSESEKSRMEDQEENTLRELRLFLRDVTKRL). Residues 951-1066 (RMEDQEENTL…DTAHAIIAAE (116 aa)) form the Bromo domain. Disordered stretches follow at residues 1189 to 1208 (DCHE…NDES), 1217 to 1257 (QGQR…EQTS), and 1309 to 1330 (LLED…DDLE). Over residues 1240-1252 (NESLLVNSSSSLN) the composition is skewed to low complexity. A phosphoserine mark is found at serine 1338 and serine 1347.

Belongs to the AAA ATPase family. Binds acetylated lysine residues in histone H1.4, H2A, H2B, H3 and H4 (in vitro).

Its subcellular location is the nucleus. The chain is ATPase family AAA domain-containing protein 2B (ATAD2B) from Homo sapiens (Human).